Here is a 730-residue protein sequence, read N- to C-terminus: Rap1 GTPase-activating protein 2 (730 aa).

Residues 247–463 (IVAYDEHEVN…RTRAALLDNL (217 aa)) form the Rap-GAP domain. Disordered regions lie at residues 510-668 (MVGS…STAS) and 698-730 (SRSPTDIKNRNSPRSNLKFRFDKLSHGSSSTSH). 2 stretches are compositionally biased toward polar residues: residues 535–557 (GEVTKTTFSPPVSAATAKNQSRS) and 597–612 (HSSQEMKSETSSNPSS). Positions 617-630 (PNKDRPFVKLKENG) are enriched in basic and acidic residues. The span at 631-651 (RSNISRSSSSTSSFSSTAGES) shows a compositional bias: low complexity. Residues 699-712 (RSPTDIKNRNSPRS) are compositionally biased toward polar residues.

The protein localises to the cytoplasm. Its function is as follows. GTPase activator for the nuclear Ras-related regulatory protein RAP-1A (KREV-1), converting it to the putatively inactive GDP-bound state. In Gallus gallus (Chicken), this protein is Rap1 GTPase-activating protein 2 (RAP1GAP2).